The primary structure comprises 142 residues: Hydrogenase maturation factor HypA (142 aa).

H2 lines the Ni(2+) pocket. Zn(2+) contacts are provided by C73, C76, C109, and C112.

It belongs to the HypA/HybF family.

Involved in the maturation of [NiFe] hydrogenases. Required for nickel insertion into the metal center of the hydrogenase. The chain is Hydrogenase maturation factor HypA from Methanopyrus kandleri (strain AV19 / DSM 6324 / JCM 9639 / NBRC 100938).